The sequence spans 632 residues: Chaperone protein HtpG (632 aa).

Residues 1-339 (MAHETMSFQA…SADLPLNVSR (339 aa)) form an a; substrate-binding region. The segment at 340–559 (EILQESRDVK…DNDMSGYLQR (220 aa)) is b. A c region spans residues 560–632 (MLKAAGQNAP…TNALLLSRAA (73 aa)).

It belongs to the heat shock protein 90 family. Homodimer.

It is found in the cytoplasm. Molecular chaperone. Has ATPase activity. The sequence is that of Chaperone protein HtpG from Burkholderia cenocepacia (strain HI2424).